We begin with the raw amino-acid sequence, 205 residues long: MSIKYVATSKLPTPWGVFAMHGFEDTETGKEHVALTFGELDASQPILGRIHSECLTGDALFSLRCDCGFQLQTAMQNIAEAGQGFILYLRQEGRGIGLLNKIRAYELQDQGANTVEANERLGFAADMRKYDMIKPMLEKIGVQQVKLMTNNPRKVKAMKELGIAVIERVPLQVGKNRYNEAYLKTKSTELGHMMSEYHFTEEHQD.

49-53 is a GTP binding site; sequence RIHSE. Zn(2+)-binding residues include Cys-54, Cys-65, and Cys-67. Residues Gln-70, 92-94, and Thr-114 each bind GTP; that span reads EGR. Residue Asp-126 is the Proton acceptor of the active site. Arg-128 serves as the catalytic Nucleophile. GTP is bound by residues Thr-149 and Lys-154.

The protein belongs to the GTP cyclohydrolase II family. Requires Zn(2+) as cofactor.

It catalyses the reaction GTP + 4 H2O = 2,5-diamino-6-hydroxy-4-(5-phosphoribosylamino)-pyrimidine + formate + 2 phosphate + 3 H(+). Its pathway is cofactor biosynthesis; riboflavin biosynthesis; 5-amino-6-(D-ribitylamino)uracil from GTP: step 1/4. Its function is as follows. Catalyzes the conversion of GTP to 2,5-diamino-6-ribosylamino-4(3H)-pyrimidinone 5'-phosphate (DARP), formate and pyrophosphate. The polypeptide is GTP cyclohydrolase-2 (Shewanella loihica (strain ATCC BAA-1088 / PV-4)).